The primary structure comprises 308 residues: Glycerol-3-phosphate dehydrogenase [NAD(P)+] (308 aa).

The NADPH site is built by Trp13, Arg33, and Lys81. Residues Lys81 and Gly109 each coordinate sn-glycerol 3-phosphate. Ala113 contributes to the NADPH binding site. The sn-glycerol 3-phosphate site is built by Lys163, Asp216, Ser226, Arg227, and Asn228. Catalysis depends on Lys163, which acts as the Proton acceptor. NADPH is bound at residue Arg227. Residue Glu253 coordinates NADPH.

The protein belongs to the NAD-dependent glycerol-3-phosphate dehydrogenase family.

The protein localises to the cytoplasm. It carries out the reaction sn-glycerol 3-phosphate + NAD(+) = dihydroxyacetone phosphate + NADH + H(+). The enzyme catalyses sn-glycerol 3-phosphate + NADP(+) = dihydroxyacetone phosphate + NADPH + H(+). It participates in membrane lipid metabolism; glycerophospholipid metabolism. Functionally, catalyzes the reduction of the glycolytic intermediate dihydroxyacetone phosphate (DHAP) to sn-glycerol 3-phosphate (G3P), the key precursor for phospholipid synthesis. In Thermosynechococcus vestitus (strain NIES-2133 / IAM M-273 / BP-1), this protein is Glycerol-3-phosphate dehydrogenase [NAD(P)+].